The following is a 227-amino-acid chain: Mitochondrial inner membrane protease ATP23 (227 aa).

His129 serves as a coordination point for a divalent metal cation. Glu130 is a catalytic residue. Residue His133 participates in a divalent metal cation binding.

It belongs to the peptidase M76 family.

It localises to the mitochondrion inner membrane. Has a dual role in the assembly of mitochondrial ATPase. Acts as a protease that removes N-terminal residues of mitochondrial ATPase CF(0) subunit 6 at the intermembrane space side. Also involved in the correct assembly of the membrane-embedded ATPase CF(0) particle, probably mediating association of subunit 6 with the subunit 9 ring. In Cryptococcus neoformans var. neoformans serotype D (strain B-3501A) (Filobasidiella neoformans), this protein is Mitochondrial inner membrane protease ATP23 (ATP23).